The sequence spans 247 residues: Large ribosomal subunit protein uL30 (247 aa).

It belongs to the universal ribosomal protein uL30 family.

The sequence is that of Large ribosomal subunit protein uL30 (RPL7L1) from Sus scrofa (Pig).